The sequence spans 100 residues: Urease subunit gamma (100 aa).

It belongs to the urease gamma subunit family. Heterotrimer of UreA (gamma), UreB (beta) and UreC (alpha) subunits. Three heterotrimers associate to form the active enzyme.

The protein localises to the cytoplasm. It carries out the reaction urea + 2 H2O + H(+) = hydrogencarbonate + 2 NH4(+). It participates in nitrogen metabolism; urea degradation; CO(2) and NH(3) from urea (urease route): step 1/1. The protein is Urease subunit gamma of Burkholderia orbicola (strain MC0-3).